A 282-amino-acid polypeptide reads, in one-letter code: Pantothenate synthetase (282 aa).

26–33 (MGNLHEGH) contributes to the ATP binding site. Catalysis depends on His33, which acts as the Proton donor. A (R)-pantoate-binding site is contributed by Gln57. A beta-alanine-binding site is contributed by Gln57. 148-151 (GKKD) is a binding site for ATP. A (R)-pantoate-binding site is contributed by Gln154. 185–188 (LSSR) contacts ATP.

The protein belongs to the pantothenate synthetase family. Homodimer.

It localises to the cytoplasm. It carries out the reaction (R)-pantoate + beta-alanine + ATP = (R)-pantothenate + AMP + diphosphate + H(+). The protein operates within cofactor biosynthesis; (R)-pantothenate biosynthesis; (R)-pantothenate from (R)-pantoate and beta-alanine: step 1/1. In terms of biological role, catalyzes the condensation of pantoate with beta-alanine in an ATP-dependent reaction via a pantoyl-adenylate intermediate. This is Pantothenate synthetase from Paracidovorax citrulli (strain AAC00-1) (Acidovorax citrulli).